Here is a 318-residue protein sequence, read N- to C-terminus: Nodulation protein D 2 (318 aa).

In terms of domain architecture, HTH lysR-type spans 6–63 (LDLNLLVALDALTTERNLTAAARSINLSQPAMSAAIGRLRDYFRDELFTMNGRELRLT). Residues 23 to 42 (LTAAARSINLSQPAMSAAIG) constitute a DNA-binding region (H-T-H motif).

Belongs to the LysR transcriptional regulatory family.

NodD regulates the expression of the nodABCFE genes which encode other nodulation proteins. NodD is also a negative regulator of its own expression. Binds flavonoids as inducers. The protein is Nodulation protein D 2 (nodD2) of Rhizobium leguminosarum bv. phaseoli.